Reading from the N-terminus, the 130-residue chain is Small ribosomal subunit protein uS8x (130 aa).

It belongs to the universal ribosomal protein uS8 family.

The sequence is that of Small ribosomal subunit protein uS8x (RPS15AD) from Arabidopsis thaliana (Mouse-ear cress).